The following is a 274-amino-acid chain: MKTTLKMTALAALSAFVLAGCGSHQMKSEGHANMQLQQQAVLGLNWMQDSGEYKALAYQAYNAAKVAFDHAKVAKGKKKAVVADLDETMLDNSPYAGWQVQNNKPFDGKDWTRWVDARQSRAVPGAVEFNNYVNSHNGKVFYVTNRKDSTEKSGTIDDMKRLGFNGVEESAFYLKKDKSAKAARFAEIEKQGYEIVLYVGDNLDDFGNTVYGKLNADRRAFVDQNQGKFGKTFIMLPNANYGGWEGGLAEGYFKKDTQGQIKARLDAVQAWDGK.

The signal sequence occupies residues 1-20; sequence MKTTLKMTALAALSAFVLAG. Residue cysteine 21 is the site of N-palmitoyl cysteine attachment. Cysteine 21 carries the S-diacylglycerol cysteine lipid modification.

It is found in the cell outer membrane. This is Lipoprotein E (hel) from Haemophilus influenzae (strain ATCC 51907 / DSM 11121 / KW20 / Rd).